The following is an 85-amino-acid chain: Scratcher peptide (85 aa).

Residues 1-24 form the signal peptide; the sequence is MTSVQSVTCCCLLWLMLSVQPITP. A propeptide spanning residues 25–38 is cleaved from the precursor; the sequence is GSPGPAQLSRERSF. E47 bears the 4-carboxyglutamate mark. D67 carries the post-translational modification Aspartic acid 1-amide. Residues 68–85 constitute a propeptide that is removed on maturation; sequence KRDVVSPRIRRRKRSKAM.

Belongs to the conotoxin J superfamily. Contains 2 disulfide bonds. Expressed by the venom duct.

It is found in the secreted. Functionally, causes scratching in mice. In Conus geographus (Geography cone), this protein is Scratcher peptide.